The chain runs to 694 residues: Elongation factor G (694 aa).

The tr-type G domain maps to 10 to 285 (EKTRNIGIMA…AVLDYLPSPV (276 aa)). GTP is bound by residues 19 to 26 (AHIDAGKT), 83 to 87 (DTPGH), and 137 to 140 (NKMD).

It belongs to the TRAFAC class translation factor GTPase superfamily. Classic translation factor GTPase family. EF-G/EF-2 subfamily.

Its subcellular location is the cytoplasm. Functionally, catalyzes the GTP-dependent ribosomal translocation step during translation elongation. During this step, the ribosome changes from the pre-translocational (PRE) to the post-translocational (POST) state as the newly formed A-site-bound peptidyl-tRNA and P-site-bound deacylated tRNA move to the P and E sites, respectively. Catalyzes the coordinated movement of the two tRNA molecules, the mRNA and conformational changes in the ribosome. The protein is Elongation factor G of Limosilactobacillus fermentum (strain NBRC 3956 / LMG 18251) (Lactobacillus fermentum).